The primary structure comprises 331 residues: DNA-directed RNA polymerase subunit alpha (331 aa).

The segment at M1–E223 is alpha N-terminal domain (alpha-NTD). Residues P260–D331 form an alpha C-terminal domain (alpha-CTD) region.

Belongs to the RNA polymerase alpha chain family. Homodimer. The RNAP catalytic core consists of 2 alpha, 1 beta, 1 beta' and 1 omega subunit. When a sigma factor is associated with the core the holoenzyme is formed, which can initiate transcription.

The catalysed reaction is RNA(n) + a ribonucleoside 5'-triphosphate = RNA(n+1) + diphosphate. In terms of biological role, DNA-dependent RNA polymerase catalyzes the transcription of DNA into RNA using the four ribonucleoside triphosphates as substrates. This Deinococcus geothermalis (strain DSM 11300 / CIP 105573 / AG-3a) protein is DNA-directed RNA polymerase subunit alpha.